The chain runs to 1004 residues: Ephrin type-A receptor 8 (1004 aa).

An N-terminal signal peptide occupies residues Met-1–Ala-26. At Gly-27–Thr-541 the chain is on the extracellular side. The Eph LBD domain maps to Glu-30–Arg-208. Fibronectin type-III domains lie at Pro-327–Ala-437 and Ala-438–Pro-533. Asn-339, Asn-406, and Asn-431 each carry an N-linked (GlcNAc...) asparagine glycan. A helical membrane pass occupies residues Ile-542–Cys-562. The mediates interaction with ANKS1A and ANKS1B stretch occupies residues Lys-563–Tyr-569. Over Lys-563–Leu-1004 the chain is Cytoplasmic. Residues Ala-588–Gly-643 form a mediates interaction with PIK3CG and required for endocytosis region. Position 615 is a phosphotyrosine; by autocatalysis (Tyr-615). One can recognise a Protein kinase domain in the interval Ile-634 to Val-895. Residues Ile-640–Val-648 and Lys-666 each bind ATP. Asp-759 functions as the Proton acceptor in the catalytic mechanism. Tyr-838 is modified (phosphotyrosine; by autocatalysis). The SAM domain occupies Asn-929 to Gln-993. A PDZ-binding motif is present at residues Arg-1002–Leu-1004.

This sequence belongs to the protein kinase superfamily. Tyr protein kinase family. Ephrin receptor subfamily. As to quaternary structure, heterotetramer upon binding of the ligand. The heterotetramer is composed of an ephrin dimer and a receptor dimer. Oligomerization is probably required to induce biological responses. May also form heterodimers with other ephrin receptors. Interacts with FYN; possible downstream effector of EPHA8 in regulation of cell adhesion. Interacts with PIK3CG; regulates integrin-mediated cell adhesion to substrate. Interacts with TIAM1; regulates clathrin-mediated endocytosis of EPHA8. Interacts with ANKS1A and ANKS1B; EPHA8 kinase activity-independent but stimulated by EPHA8 ubiquitination. Phosphorylated. Phosphorylation is stimulated upon binding of its ligands including EFNA2, EFNA3 and EFNA5. Autophosphorylation on Tyr-615 is critical for association with FYN. Autophosphorylation on Tyr-838 modulates tyrosine kinase activity. In terms of processing, ubiquitinated. Ubiquitination by CBL regulates the receptor stability and activity through proteasomal degradation. ANKS1A prevents ubiquitination and degradation. Specifically expressed in the central nervous system.

The protein resides in the cell membrane. It is found in the cell projection. The protein localises to the early endosome membrane. It carries out the reaction L-tyrosyl-[protein] + ATP = O-phospho-L-tyrosyl-[protein] + ADP + H(+). Receptor tyrosine kinase which binds promiscuously GPI-anchored ephrin-A family ligands residing on adjacent cells, leading to contact-dependent bidirectional signaling into neighboring cells. The signaling pathway downstream of the receptor is referred to as forward signaling while the signaling pathway downstream of the ephrin ligand is referred to as reverse signaling. The GPI-anchored ephrin-A EFNA2, EFNA3, and EFNA5 are able to activate EPHA8 through phosphorylation. With EFNA5 may regulate integrin-mediated cell adhesion and migration on fibronectin substrate but also neurite outgrowth. During development of the nervous system also plays a role in axon guidance. Downstream effectors of the EPHA8 signaling pathway include FYN which promotes cell adhesion upon activation by EPHA8 and the MAP kinases in the stimulation of neurite outgrowth. This is Ephrin type-A receptor 8 (Epha8) from Mus musculus (Mouse).